The sequence spans 202 residues: Small ribosomal subunit protein uS4c (202 aa).

The interval 18–45 (LPGLTRKMAKRKSPPGQHGAASKKPSQY) is disordered. One can recognise an S4 RNA-binding domain in the interval 90-152 (MRLDTTIFRL…SRSRKLIEGY (63 aa)).

The protein belongs to the universal ribosomal protein uS4 family. In terms of assembly, part of the 30S ribosomal subunit. Contacts protein S5. The interaction surface between S4 and S5 is involved in control of translational fidelity.

The protein localises to the plastid. It is found in the chloroplast. Functionally, one of the primary rRNA binding proteins, it binds directly to 16S rRNA where it nucleates assembly of the body of the 30S subunit. Its function is as follows. With S5 and S12 plays an important role in translational accuracy. In Nephroselmis olivacea (Green alga), this protein is Small ribosomal subunit protein uS4c (rps4).